A 601-amino-acid polypeptide reads, in one-letter code: MEFKVIAEYFDKLEKISSRLQLTALLADLLSKSDKAIIDKVVYIIQGKLWPDFLGYPELGIGEKFLIKAISIATNTDENSVENLYKSIGDLGEVARRLKSKQQSTGILGFLGTSSKESLKVDEVYSTLSKVALTTGEGSRDLKIRLLAGLLKKADPLEAKFLVRFVEGRLRVGIGDATVLDAMAIAFGGGQSASEIVERAYNLRADLGNIAKIIVEKGIEALKTLKPEVGIPIRPMLAERLSNPEEILKKVGGSALVDYKYDGERAQIHKKDDKIFIFSRRLENITSQYPDVVEYISKYTEGKEFIIEGEIVAVDPESGEMRSFQELMHRKRKSDIYEAIKEYPVNVFLFDLMYYEDVDYTTKPLEVRRKLLESIVKPNDYVKIAHHIQVNNIEDLKSFFYRAISEGGEGVMVKAIGKDAIYQAGARGWLWIKLKRDYQSEMADTVDLVVVGGFYGKGKRGGKISSLLMAAYNPKTDTFESVCKVASGFSDEQLDELQKKLMEIKRDIKHPRVNSKMEPDIWVEPVYVAEIIGAEITISPLHTCCQDVVEKDAGLSIRFPRFIRWRDDKSPEDATTTDEILEMYNKQPKKKIESPPIDESV.

Asp258 contributes to the ATP binding site. Catalysis depends on Lys260, which acts as the N6-AMP-lysine intermediate. ATP-binding residues include Arg265, Arg280, Glu310, Phe350, Arg427, and Lys433. Positions 568–601 (DKSPEDATTTDEILEMYNKQPKKKIESPPIDESV) are disordered.

Belongs to the ATP-dependent DNA ligase family. Mg(2+) is required as a cofactor.

It catalyses the reaction ATP + (deoxyribonucleotide)n-3'-hydroxyl + 5'-phospho-(deoxyribonucleotide)m = (deoxyribonucleotide)n+m + AMP + diphosphate.. DNA ligase that seals nicks in double-stranded DNA during DNA replication, DNA recombination and DNA repair. This is DNA ligase from Saccharolobus islandicus (strain Y.G.57.14 / Yellowstone #1) (Sulfolobus islandicus).